The primary structure comprises 275 residues: Dermonecrotic toxin LamSicTox-alphaIV1ii (275 aa).

His5 is an active-site residue. Mg(2+)-binding residues include Glu25 and Asp27. His41 functions as the Nucleophile in the catalytic mechanism. Disulfide bonds link Cys45/Cys51 and Cys47/Cys192. Asp85 is a binding site for Mg(2+).

This sequence belongs to the arthropod phospholipase D family. Class II subfamily. Mg(2+) is required as a cofactor. As to expression, expressed by the venom gland.

The protein localises to the secreted. It catalyses the reaction an N-(acyl)-sphingosylphosphocholine = an N-(acyl)-sphingosyl-1,3-cyclic phosphate + choline. The enzyme catalyses an N-(acyl)-sphingosylphosphoethanolamine = an N-(acyl)-sphingosyl-1,3-cyclic phosphate + ethanolamine. It carries out the reaction a 1-acyl-sn-glycero-3-phosphocholine = a 1-acyl-sn-glycero-2,3-cyclic phosphate + choline. The catalysed reaction is a 1-acyl-sn-glycero-3-phosphoethanolamine = a 1-acyl-sn-glycero-2,3-cyclic phosphate + ethanolamine. Functionally, dermonecrotic toxins cleave the phosphodiester linkage between the phosphate and headgroup of certain phospholipids (sphingolipid and lysolipid substrates), forming an alcohol (often choline) and a cyclic phosphate. This toxin acts on sphingomyelin (SM). It may also act on ceramide phosphoethanolamine (CPE), lysophosphatidylcholine (LPC) and lysophosphatidylethanolamine (LPE), but not on lysophosphatidylserine (LPS), and lysophosphatidylglycerol (LPG). It acts by transphosphatidylation, releasing exclusively cyclic phosphate products as second products. Induces dermonecrosis, hemolysis, increased vascular permeability, edema, inflammatory response, and platelet aggregation. This Loxosceles amazonica (Recluse spider) protein is Dermonecrotic toxin LamSicTox-alphaIV1ii.